A 396-amino-acid chain; its full sequence is S-adenosylmethionine synthase 2 (396 aa).

Glu13 serves as a coordination point for Mg(2+). Residue His19 participates in ATP binding. A K(+)-binding site is contributed by Glu47. Residues Glu60 and Gln103 each contribute to the L-methionine site. ATP-binding positions include 171–173, 239–242, Asp250, 256–257, Ala273, Lys277, and Lys281; these read DGK, SGRF, and RK. Residue Asp250 participates in L-methionine binding. Lys281 contributes to the L-methionine binding site.

This sequence belongs to the AdoMet synthase family. As to quaternary structure, homotetramer. The cofactor is Mn(2+). Requires Mg(2+) as cofactor. Co(2+) is required as a cofactor. It depends on K(+) as a cofactor. In terms of tissue distribution, expressed in roots, stems and leaves (at protein level).

It localises to the cytoplasm. The enzyme catalyses L-methionine + ATP + H2O = S-adenosyl-L-methionine + phosphate + diphosphate. Its pathway is amino-acid biosynthesis; S-adenosyl-L-methionine biosynthesis; S-adenosyl-L-methionine from L-methionine: step 1/1. Its function is as follows. Catalyzes the formation of S-adenosylmethionine from methionine and ATP. The reaction comprises two steps that are both catalyzed by the same enzyme: formation of S-adenosylmethionine (AdoMet) and triphosphate, and subsequent hydrolysis of the triphosphate. May be involved in the synthesis of betain in response to abiotic stress such as high salinity. The sequence is that of S-adenosylmethionine synthase 2 (SAMS2) from Atriplex nummularia (Old man saltbush).